The sequence spans 170 residues: MEGRKSEDEKNEAALACDVFESSNAKLPKNVFRSSFTWYCYEVINRSAFHIWLLLCLTLIVGWKVFSGIGGRRPSDSNMDGPQTKHKRNPGFLRRHSTIVILVISLAVSFSWEAFKMYRERTFGKQITQFAKEIIKSAPSTDMESWDRVAADFNSYMYENKLWNTEYFFC.

Residue N45 is glycosylated (N-linked (GlcNAc...) asparagine). Transmembrane regions (helical) follow at residues 51–71 and 98–118; these read IWLL…GIGG and TIVI…FKMY.

It belongs to the DUP/COS family.

Its subcellular location is the membrane. May be involved in cell wall organization and biogenesis. The chain is Protein ECM34 (ECM34) from Saccharomyces cerevisiae (strain ATCC 204508 / S288c) (Baker's yeast).